The primary structure comprises 197 residues: Peptide deformylase (197 aa).

2 residues coordinate Fe cation: Cys-106 and His-148. Glu-149 is a catalytic residue. Residue His-152 participates in Fe cation binding.

It belongs to the polypeptide deformylase family. The cofactor is Fe(2+).

It catalyses the reaction N-terminal N-formyl-L-methionyl-[peptide] + H2O = N-terminal L-methionyl-[peptide] + formate. Removes the formyl group from the N-terminal Met of newly synthesized proteins. Requires at least a dipeptide for an efficient rate of reaction. N-terminal L-methionine is a prerequisite for activity but the enzyme has broad specificity at other positions. The protein is Peptide deformylase of Mycobacterium tuberculosis (strain ATCC 25177 / H37Ra).